The following is a 1433-amino-acid chain: DNA-directed RNA polymerase subunit beta' (1433 aa).

4 residues coordinate Zn(2+): Cys-66, Cys-68, Cys-81, and Cys-84. Mg(2+) is bound by residues Asp-473, Asp-475, and Asp-477. 4 residues coordinate Zn(2+): Cys-815, Cys-889, Cys-896, and Cys-899.

This sequence belongs to the RNA polymerase beta' chain family. As to quaternary structure, the RNAP catalytic core consists of 2 alpha, 1 beta, 1 beta' and 1 omega subunit. When a sigma factor is associated with the core the holoenzyme is formed, which can initiate transcription. Mg(2+) serves as cofactor. Requires Zn(2+) as cofactor.

The enzyme catalyses RNA(n) + a ribonucleoside 5'-triphosphate = RNA(n+1) + diphosphate. Functionally, DNA-dependent RNA polymerase catalyzes the transcription of DNA into RNA using the four ribonucleoside triphosphates as substrates. This is DNA-directed RNA polymerase subunit beta' from Porphyromonas gingivalis (strain ATCC BAA-308 / W83).